The chain runs to 261 residues: tRNA pseudouridine synthase A (261 aa).

D51 acts as the Nucleophile in catalysis. Y109 serves as a coordination point for substrate.

Belongs to the tRNA pseudouridine synthase TruA family. Homodimer.

It catalyses the reaction uridine(38/39/40) in tRNA = pseudouridine(38/39/40) in tRNA. Its function is as follows. Formation of pseudouridine at positions 38, 39 and 40 in the anticodon stem and loop of transfer RNAs. In Photobacterium profundum (strain SS9), this protein is tRNA pseudouridine synthase A.